The primary structure comprises 124 residues: Fluoride-specific ion channel FluC (124 aa).

The next 4 membrane-spanning stretches (helical) occupy residues 2–22 (LNIA…RWLI), 35–55 (TGTL…IAWF), 71–91 (TGFC…VALF), and 100–120 (LGTM…AFWL). Glycine 75 and threonine 78 together coordinate Na(+).

This sequence belongs to the fluoride channel Fluc/FEX (TC 1.A.43) family.

The protein resides in the cell inner membrane. The catalysed reaction is fluoride(in) = fluoride(out). With respect to regulation, na(+) is not transported, but it plays an essential structural role and its presence is essential for fluoride channel function. In terms of biological role, fluoride-specific ion channel. Important for reducing fluoride concentration in the cell, thus reducing its toxicity. The chain is Fluoride-specific ion channel FluC from Proteus mirabilis (strain HI4320).